The chain runs to 1009 residues: Rho-type GTPase-activating protein 2 (1009 aa).

LIM zinc-binding domains follow at residues 11–68 (SLCV…DCSD) and 69–129 (KCTN…LLRK). A compositionally biased stretch (basic and acidic residues) spans 143 to 155 (KEDFPIKLPERSV). Disordered stretches follow at residues 143 to 228 (KEDF…RTVS), 358 to 433 (TKEN…LSRS), 449 to 608 (TSEM…DATD), 664 to 709 (TREK…ASPK), and 723 to 780 (QVGD…DYTP). A compositionally biased stretch (polar residues) spans 162–196 (TRINGKSDVSTNNTAISKNLVSSNEDQQLTPQVLV). Basic and acidic residues predominate over residues 212–222 (DNSKDREETSS). 2 stretches are compositionally biased toward polar residues: residues 363 to 385 (KSSQ…ITRT) and 399 to 414 (LRLS…QTAD). Residues 481-491 (NIRKSKAKKNP) are compositionally biased toward basic residues. Composition is skewed to polar residues over residues 493 to 510 (SRGQ…QHGN) and 522 to 553 (QSSL…SSSG). Basic and acidic residues predominate over residues 664–682 (TREKDKQSASSRESLEQKE). Composition is skewed to polar residues over residues 683 to 707 (NIAT…SNAS) and 728 to 749 (ESQQ…QKEI). S763 bears the Phosphoserine mark. A Rho-GAP domain is found at 788–1006 (SSLQARCAYE…FILGNYRDIF (219 aa)).

In terms of biological role, GTPase-activating protein (GAP) for CDC42 and/or RHO1. The sequence is that of Rho-type GTPase-activating protein 2 (RGA2) from Saccharomyces cerevisiae (strain ATCC 204508 / S288c) (Baker's yeast).